The sequence spans 337 residues: Probable allantoicase 1 (337 aa).

The protein belongs to the allantoicase family.

The catalysed reaction is allantoate + H2O = (S)-ureidoglycolate + urea. It participates in nitrogen metabolism; (S)-allantoin degradation; (S)-ureidoglycolate from allantoate (aminidohydrolase route): step 1/1. This Burkholderia mallei (strain ATCC 23344) protein is Probable allantoicase 1.